The primary structure comprises 149 residues: Large ribosomal subunit protein uL30 (149 aa).

This sequence belongs to the universal ribosomal protein uL30 family. As to quaternary structure, part of the 50S ribosomal subunit.

The protein is Large ribosomal subunit protein uL30 of Methanopyrus kandleri (strain AV19 / DSM 6324 / JCM 9639 / NBRC 100938).